We begin with the raw amino-acid sequence, 509 residues long: MDIRAAEISAILKDQIKNFGQEAEVSEVGQVLSVGDGIARVYGLDNVQAGEMVEFPGGIRGMALNLEADNVGVVIFGSDRDIKEGDTVKRTGAIVDVPVGPELLGRVVDALGNPIDGKGPINAKQRSRVDIKAPGIIPRKSVHEPMSTGLKAIDALIPVGRGQRELVIGDRQTGKTAIILDTILNQKAIHDNGPEGDKLYCVYVAIGQKRSTVAQFVKVLEERGALQYSIIVAATASDPAPMQYLAPFAGCAMGEYFRDNGKHALIGYDDLSKQAVAYRQMSLLLRRPPGREAYPGDVFYLHSRLLERAAKLNDDNGAGSLTALPVIETQGNDVSAFIPTNVISITDGQIFLETDLFYQGIRPAVNVGLSVSRVGSSAQIKAMKQVAGSIKGELAQYREMAAFAQFGSDLDAATQRLLNRGARLTELLKQPQFSPLKTEEQVAVIFAGVNGYLDKLPVNQVGKFEQGLLSYLRSEGKAVLDTIRTEKAISDDTKAKLKTAIDSFSKSFA.

169-176 contributes to the ATP binding site; sequence GDRQTGKT.

The protein belongs to the ATPase alpha/beta chains family. In terms of assembly, F-type ATPases have 2 components, CF(1) - the catalytic core - and CF(0) - the membrane proton channel. CF(1) has five subunits: alpha(3), beta(3), gamma(1), delta(1), epsilon(1). CF(0) has three main subunits: a(1), b(2) and c(9-12). The alpha and beta chains form an alternating ring which encloses part of the gamma chain. CF(1) is attached to CF(0) by a central stalk formed by the gamma and epsilon chains, while a peripheral stalk is formed by the delta and b chains.

Its subcellular location is the cell inner membrane. It catalyses the reaction ATP + H2O + 4 H(+)(in) = ADP + phosphate + 5 H(+)(out). In terms of biological role, produces ATP from ADP in the presence of a proton gradient across the membrane. The alpha chain is a regulatory subunit. This chain is ATP synthase subunit alpha, found in Sinorhizobium fredii (strain NBRC 101917 / NGR234).